Here is a 331-residue protein sequence, read N- to C-terminus: RNA 3'-terminal phosphate cyclase (331 aa).

ATP-binding positions include Gln-100 and His-276–Gln-280. The active-site Tele-AMP-histidine intermediate is the His-301.

Belongs to the RNA 3'-terminal cyclase family. Type 1 subfamily.

It is found in the cytoplasm. It carries out the reaction a 3'-end 3'-phospho-ribonucleotide-RNA + ATP = a 3'-end 2',3'-cyclophospho-ribonucleotide-RNA + AMP + diphosphate. Its function is as follows. Catalyzes the conversion of 3'-phosphate to a 2',3'-cyclic phosphodiester at the end of RNA. The mechanism of action of the enzyme occurs in 3 steps: (A) adenylation of the enzyme by ATP; (B) transfer of adenylate to an RNA-N3'P to produce RNA-N3'PP5'A; (C) and attack of the adjacent 2'-hydroxyl on the 3'-phosphorus in the diester linkage to produce the cyclic end product. The biological role of this enzyme is unknown but it is likely to function in some aspects of cellular RNA processing. The sequence is that of RNA 3'-terminal phosphate cyclase from Methanosarcina barkeri (strain Fusaro / DSM 804).